A 99-amino-acid chain; its full sequence is DNA-binding protein Fis (99 aa).

The segment at residues 75–94 is a DNA-binding region (H-T-H motif); it reads QTRAANMLGINRGTLRKKLK.

This sequence belongs to the transcriptional regulatory Fis family. Homodimer.

Its function is as follows. Activates ribosomal RNA transcription. Plays a direct role in upstream activation of rRNA promoters. The protein is DNA-binding protein Fis of Haemophilus influenzae (strain PittEE).